Reading from the N-terminus, the 321-residue chain is Phospho-N-acetylmuramoyl-pentapeptide-transferase (321 aa).

The next 10 helical transmembrane spans lie at 1-21 (MIFIYAIIALLITFILVPILI), 50-70 (MGGLTFLISIIITSIIAIIFV), 76-96 (IILLLFVTIGFGLIGFIDDYI), 112-132 (FLAQIIIAVIFFVLSDVFHLV), 140-160 (IPFVNFDIPLSFAYVIFIVFW), 176-196 (GLATGLSIIGFAMYAVMSYML), 200-220 (AIGIFCIIMIFALLGFLPYNL), 225-245 (VFMGDTGSLALGGIFATISIM), 250-270 (LSLILIGFVFVVETLSVMLQV), and 300-320 (VVTVFWTVGLITGLIGLWIGV).

Belongs to the glycosyltransferase 4 family. MraY subfamily. The cofactor is Mg(2+).

The protein localises to the cell membrane. The catalysed reaction is UDP-N-acetyl-alpha-D-muramoyl-L-alanyl-gamma-D-glutamyl-L-lysyl-D-alanyl-D-alanine + di-trans,octa-cis-undecaprenyl phosphate = Mur2Ac(oyl-L-Ala-gamma-D-Glu-L-Lys-D-Ala-D-Ala)-di-trans,octa-cis-undecaprenyl diphosphate + UMP. Its pathway is cell wall biogenesis; peptidoglycan biosynthesis. Catalyzes the initial step of the lipid cycle reactions in the biosynthesis of the cell wall peptidoglycan: transfers peptidoglycan precursor phospho-MurNAc-pentapeptide from UDP-MurNAc-pentapeptide onto the lipid carrier undecaprenyl phosphate, yielding undecaprenyl-pyrophosphoryl-MurNAc-pentapeptide, known as lipid I. This Staphylococcus epidermidis (strain ATCC 35984 / DSM 28319 / BCRC 17069 / CCUG 31568 / BM 3577 / RP62A) protein is Phospho-N-acetylmuramoyl-pentapeptide-transferase.